Reading from the N-terminus, the 176-residue chain is Cell division control protein 31 (176 aa).

Residues 1 to 12 (MFANARAKRRSR) are compositionally biased toward basic residues. Residues 1-21 (MFANARAKRRSRASSPTPARL) are disordered. 4 consecutive EF-hand domains span residues 34 to 69 (EQRQ…LGFN), 70 to 105 (AEKS…KIVE), 107 to 142 (DPLE…LNEN), and 143 to 176 (IDDQ…MDEA). 4 residues coordinate Ca(2+): Asp-47, Asp-49, Asp-51, and Glu-58. The Ca(2+) site is built by Asp-156, Asp-158, Asp-160, Glu-162, and Glu-167.

Belongs to the centrin family. In terms of assembly, component of the spindle pole body (SPB), acting as the connector of microtubule arrays in the cytoplasm and the nucleoplasm, is involved in nuclear positioning before chromosome segregation, SPB separation, spindle formation, chromosome segregation, nuclear migration into the bud, nuclear reorientation after cytokinesis and nuclear fusion during conjugation. The SPB half-bridge, which is tightly associated with the cytoplasmic side of the nuclear envelope and the SPB, is playing a key role as the starting structure for and in the initiation of SPB duplication in G1. Within the complex, interacts with sad1.

The protein localises to the nucleus. In terms of biological role, required for the proper coordination between exit from mitosis and the initiation of septation. Has a role in bipolar spindle formation during spindle pole body (SPB) duplication. Required for the localization of sad1 to the SPB. The protein is Cell division control protein 31 (cdc31) of Schizosaccharomyces pombe (strain 972 / ATCC 24843) (Fission yeast).